The following is a 345-amino-acid chain: Holliday junction branch migration complex subunit RuvB (345 aa).

The segment at 1–182 (MQRLVEVESV…FGMHFRMQFY (182 aa)) is large ATPase domain (RuvB-L). Residues Leu21, Arg22, Gly63, Lys66, Thr67, Thr68, 129–131 (EDY), Arg172, Tyr182, and Arg219 contribute to the ATP site. Position 67 (Thr67) interacts with Mg(2+). The segment at 183–253 (TEIELAKIIQ…RCKYALDELG (71 aa)) is small ATPAse domain (RuvB-S). Positions 256–345 (ESGFDEMDIN…EDDLTQGKLF (90 aa)) are head domain (RuvB-H). Residues Arg310 and Arg315 each coordinate DNA.

The protein belongs to the RuvB family. As to quaternary structure, homohexamer. Forms an RuvA(8)-RuvB(12)-Holliday junction (HJ) complex. HJ DNA is sandwiched between 2 RuvA tetramers; dsDNA enters through RuvA and exits via RuvB. An RuvB hexamer assembles on each DNA strand where it exits the tetramer. Each RuvB hexamer is contacted by two RuvA subunits (via domain III) on 2 adjacent RuvB subunits; this complex drives branch migration. In the full resolvosome a probable DNA-RuvA(4)-RuvB(12)-RuvC(2) complex forms which resolves the HJ.

The protein localises to the cytoplasm. It catalyses the reaction ATP + H2O = ADP + phosphate + H(+). In terms of biological role, the RuvA-RuvB-RuvC complex processes Holliday junction (HJ) DNA during genetic recombination and DNA repair, while the RuvA-RuvB complex plays an important role in the rescue of blocked DNA replication forks via replication fork reversal (RFR). RuvA specifically binds to HJ cruciform DNA, conferring on it an open structure. The RuvB hexamer acts as an ATP-dependent pump, pulling dsDNA into and through the RuvAB complex. RuvB forms 2 homohexamers on either side of HJ DNA bound by 1 or 2 RuvA tetramers; 4 subunits per hexamer contact DNA at a time. Coordinated motions by a converter formed by DNA-disengaged RuvB subunits stimulates ATP hydrolysis and nucleotide exchange. Immobilization of the converter enables RuvB to convert the ATP-contained energy into a lever motion, pulling 2 nucleotides of DNA out of the RuvA tetramer per ATP hydrolyzed, thus driving DNA branch migration. The RuvB motors rotate together with the DNA substrate, which together with the progressing nucleotide cycle form the mechanistic basis for DNA recombination by continuous HJ branch migration. Branch migration allows RuvC to scan DNA until it finds its consensus sequence, where it cleaves and resolves cruciform DNA. This Aliarcobacter butzleri (strain RM4018) (Arcobacter butzleri) protein is Holliday junction branch migration complex subunit RuvB.